Reading from the N-terminus, the 82-residue chain is Envelope small membrane protein (82 aa).

At 1-16 (MVDLFFNDTAWYIGQI) the chain is on the virion surface side. A helical membrane pass occupies residues 17-37 (LVLVLFCLISLIFVVAFLATI). Residues 38-79 (KLCMQLCGFCNFFIISPSAYVYKRGMQLYKSYSEQVIPPTSD) lie on the Intravirion side of the membrane.

Belongs to the betacoronaviruses E protein family. In terms of assembly, homopentamer. Interacts with membrane protein M in the budding compartment of the host cell, which is located between endoplasmic reticulum and the Golgi complex. Interacts with Nucleoprotein.

The protein resides in the host Golgi apparatus membrane. Functionally, plays a central role in virus morphogenesis and assembly. Acts as a viroporin and self-assembles in host membranes forming pentameric protein-lipid pores that allow ion transport. Also plays a role in the induction of apoptosis. The polypeptide is Envelope small membrane protein (Human coronavirus HKU1 (isolate N1) (HCoV-HKU1)).